The sequence spans 326 residues: F-box/LRR-repeat protein 12 (326 aa).

One can recognise an F-box domain in the interval 1-47; sequence MATLFDLPDLVLLEIFSYLPVRDRIRISRVCHRWKRLVDDRWLWRHV. 8 LRR repeats span residues 51-78, 86-111, 113-133, 161-185, 186-211, 212-236, 237-261, and 266-291; these read LYTMRPKVMWHLLRRYMASRLYSLRMGG, APQLSPALMRALGQKCPNLKRLCLHV, DLSMVPITSLPSTLRTLELHS, VPAFRDEHLQGLTRFRALRSLVLGG, TYRVTETGLDASLQELSYLQRLEVLG, CTLSADSTLLAISRHLRDVRKIRLT, VGGLSAQGLVFLEGMPVLESLCFQG, and PDMPTPTQIVSSCLTMPKLRVLEVQG.

Interacts with SKP1 and CUL1.

It participates in protein modification; protein ubiquitination. In terms of biological role, substrate-recognition component of the SCF (SKP1-CUL1-F-box protein)-type E3 ubiquitin ligase complex. Mediates the polyubiquitination and proteasomal degradation of CAMK1 leading to disruption of cyclin D1/CDK4 complex assembly which results in G1 cell cycle arrest in lung epithelia. The protein is F-box/LRR-repeat protein 12 (Fbxl12) of Mus musculus (Mouse).